Here is a 355-residue protein sequence, read N- to C-terminus: uncharacterized protein (355 aa).

Helical transmembrane passes span 275–295 (SLIV…FVAF), 301–321 (WNSI…VVGV), and 330–350 (IAST…PLAL).

It to M.tuberculosis Rv0497.

It localises to the cell membrane. This is an uncharacterized protein from Mycobacterium leprae (strain TN).